The chain runs to 147 residues: MDLNTLKPALGSVKQGKRIGRGPGSGHGKTATKGHKGQKARSGGSIKAGFEGGQMPLQRRLPKRGFTPLSRVEYAIVNLKQLDAFEANSSVDTESLVAMGLVKSTACAVKILGNGDLAKSLRVSASKFSQSAKDKILAAGGTVEETV.

A disordered region spans residues 1 to 62; the sequence is MDLNTLKPAL…GQMPLQRRLP (62 aa). Residues 30-39 show a composition bias toward basic residues; sequence TATKGHKGQK.

It belongs to the universal ribosomal protein uL15 family. In terms of assembly, part of the 50S ribosomal subunit.

Its function is as follows. Binds to the 23S rRNA. This chain is Large ribosomal subunit protein uL15, found in Pelobacter propionicus (strain DSM 2379 / NBRC 103807 / OttBd1).